The following is a 358-amino-acid chain: Isopentenyl-diphosphate delta-isomerase (358 aa).

Substrate is bound at residue 12–13 (RK). FMN contacts are provided by residues 69 to 71 (AMT), serine 99, and asparagine 128. Glutamine 158 provides a ligand contact to substrate. Glutamate 159 contacts Mg(2+). Residues lysine 190, threonine 220, 267 to 269 (GIR), and 288 to 289 (AG) each bind FMN.

This sequence belongs to the IPP isomerase type 2 family. In terms of assembly, homooctamer. Dimer of tetramers. The cofactor is FMN. It depends on NADPH as a cofactor. Mg(2+) serves as cofactor.

It localises to the cytoplasm. The catalysed reaction is isopentenyl diphosphate = dimethylallyl diphosphate. In terms of biological role, involved in the biosynthesis of isoprenoids. Catalyzes the 1,3-allylic rearrangement of the homoallylic substrate isopentenyl (IPP) to its allylic isomer, dimethylallyl diphosphate (DMAPP). The protein is Isopentenyl-diphosphate delta-isomerase of Listeria monocytogenes serotype 4b (strain F2365).